A 384-amino-acid chain; its full sequence is MGAHAIVTDANISSSLENNTTGITAFSMPGWQLALWATAYLVLVLVAVTGNATVIWIILAHQRMRTVTNYFIVNLALADLCMAAFNAAFNFVYASHNIWYFGRAFCHFQNLFPITAMFVSIYSMTAIAADRYVAIVHPFQPRLSAPGTRAVIAGIWLLALALAFPQCFYSTITMDQGATKCVVVWPEDNGSKMLLLYHLVVIALIYVLPLLVMLLAYSVIGLTLWRREVPRHQVHGASLRHLRAKKKFVKTMVLVVVTFAICWLPYHFYFILGSFQEDIYYHKFIQQVYLALFWLAMSSTMYNPIIYCCLNHRFRSGFRLAFRCCPWVTPTEEDKIELTHTPSLSARINRCHTKETFFMAGETALSPATNGQARGPQDGLPDEP.

Residues 1-32 (MGAHAIVTDANISSSLENNTTGITAFSMPGWQ) are Extracellular-facing. Residues Asn11, Asn18, and Asn19 are each glycosylated (N-linked (GlcNAc...) asparagine). A helical membrane pass occupies residues 33–56 (LALWATAYLVLVLVAVTGNATVIW). Over 57-69 (IILAHQRMRTVTN) the chain is Cytoplasmic. A helical transmembrane segment spans residues 70–90 (YFIVNLALADLCMAAFNAAFN). Residues 91 to 107 (FVYASHNIWYFGRAFCH) are Extracellular-facing. Residues Cys106 and Cys181 are joined by a disulfide bond. Residues 108–129 (FQNLFPITAMFVSIYSMTAIAA) traverse the membrane as a helical segment. At 130–149 (DRYVAIVHPFQPRLSAPGTR) the chain is on the cytoplasmic side. Residues 150–170 (AVIAGIWLLALALAFPQCFYS) form a helical membrane-spanning segment. Residues 171–196 (TITMDQGATKCVVVWPEDNGSKMLLL) lie on the Extracellular side of the membrane. A helical membrane pass occupies residues 197 to 218 (YHLVVIALIYVLPLLVMLLAYS). Topologically, residues 219-251 (VIGLTLWRREVPRHQVHGASLRHLRAKKKFVKT) are cytoplasmic. Residues 252-272 (MVLVVVTFAICWLPYHFYFIL) traverse the membrane as a helical segment. Topologically, residues 273–290 (GSFQEDIYYHKFIQQVYL) are extracellular. Residues 291–310 (ALFWLAMSSTMYNPIIYCCL) form a helical membrane-spanning segment. Over 311 to 384 (NHRFRSGFRL…GPQDGLPDEP (74 aa)) the chain is Cytoplasmic. Cys324 carries S-palmitoyl cysteine lipidation.

The protein belongs to the G-protein coupled receptor 1 family.

The protein localises to the cell membrane. Its function is as follows. This is a receptor for the tachykinin neuropeptide substance K (neurokinin A). It is associated with G proteins that activate a phosphatidylinositol-calcium second messenger system. In Canis lupus familiaris (Dog), this protein is Substance-K receptor (TACR2).